The primary structure comprises 154 residues: MFNIVLFEPEIPPNTGNIIRVCANTGCRLHLIEPLGFELDDKRLRRAGLDYGEWQSVVTHANWDAFIKQQAPERLWALSTKGTKFHHEVSIGEGDYLVFGPETRGLPMEILEYITFDNVLRIPMLPNSRSMNLSNAASVMVYEAWRQLGFAGSK.

S-adenosyl-L-methionine-binding residues include L78, G100, I122, and S130.

The protein belongs to the class IV-like SAM-binding methyltransferase superfamily. RNA methyltransferase TrmH family. TrmL subfamily. In terms of assembly, homodimer.

It localises to the cytoplasm. It carries out the reaction cytidine(34) in tRNA + S-adenosyl-L-methionine = 2'-O-methylcytidine(34) in tRNA + S-adenosyl-L-homocysteine + H(+). The enzyme catalyses 5-carboxymethylaminomethyluridine(34) in tRNA(Leu) + S-adenosyl-L-methionine = 5-carboxymethylaminomethyl-2'-O-methyluridine(34) in tRNA(Leu) + S-adenosyl-L-homocysteine + H(+). Methylates the ribose at the nucleotide 34 wobble position in the two leucyl isoacceptors tRNA(Leu)(CmAA) and tRNA(Leu)(cmnm5UmAA). Catalyzes the methyl transfer from S-adenosyl-L-methionine to the 2'-OH of the wobble nucleotide. The protein is tRNA (cytidine(34)-2'-O)-methyltransferase of Saccharophagus degradans (strain 2-40 / ATCC 43961 / DSM 17024).